The chain runs to 310 residues: ADP-L-glycero-D-manno-heptose-6-epimerase (310 aa).

Residues 10–11 (FI), 31–32 (DN), Lys-38, Lys-53, 75–79 (EGACS), and Asn-92 each bind NADP(+). Tyr-140 serves as the catalytic Proton acceptor. Residue Lys-144 participates in NADP(+) binding. Asn-169 provides a ligand contact to substrate. Positions 170 and 178 each coordinate NADP(+). Lys-178 functions as the Proton acceptor in the catalytic mechanism. Substrate is bound by residues Ser-180, His-187, 201–204 (FEGS), Arg-209, and Tyr-272.

This sequence belongs to the NAD(P)-dependent epimerase/dehydratase family. HldD subfamily. As to quaternary structure, homopentamer. NADP(+) is required as a cofactor.

It catalyses the reaction ADP-D-glycero-beta-D-manno-heptose = ADP-L-glycero-beta-D-manno-heptose. It participates in nucleotide-sugar biosynthesis; ADP-L-glycero-beta-D-manno-heptose biosynthesis; ADP-L-glycero-beta-D-manno-heptose from D-glycero-beta-D-manno-heptose 7-phosphate: step 4/4. Catalyzes the interconversion between ADP-D-glycero-beta-D-manno-heptose and ADP-L-glycero-beta-D-manno-heptose via an epimerization at carbon 6 of the heptose. This Salmonella arizonae (strain ATCC BAA-731 / CDC346-86 / RSK2980) protein is ADP-L-glycero-D-manno-heptose-6-epimerase.